A 398-amino-acid polypeptide reads, in one-letter code: Phospholipase C (398 aa).

Positions 1 to 26 (MKALKKVSNILCVLGLCTLMGGTSYA) are cleaved as a signal peptide. Residues W27, H37, D82, H94, H152, D156, H162, H174, and E178 each contribute to the Zn(2+) site. Residues 27–276 (WDGKKDGTGT…NEVSNGNTGD (250 aa)) form the Zn-dependent PLC domain. Residues 273–281 (NTGDNDSLT) form a linker region. Residues 282–398 (NEFNIVLKTA…TGNETYYINK (117 aa)) form the PLAT domain. G297, T298, D299, D319, N320, G322, N323, D324, and D363 together coordinate Ca(2+).

The protein belongs to the bacterial zinc-metallophospholipase C family. It depends on Ca(2+) as a cofactor. The cofactor is Zn(2+).

Its subcellular location is the secreted. The enzyme catalyses a 1,2-diacyl-sn-glycero-3-phosphocholine + H2O = phosphocholine + a 1,2-diacyl-sn-glycerol + H(+). Its function is as follows. Bacterial hemolysins are exotoxins that attack blood cell membranes and cause cell rupture. Binds to eukaryotic membranes where it hydrolyzes phosphatidylcholine. This enzyme has 10-fold less activity towards sphingomyelin than its C.perfringens counterpart, is approximately 100-fold less hemolytic against mouse erythrocytes and at least 100-fold less toxic in mice. The polypeptide is Phospholipase C (plc) (Paraclostridium bifermentans (Clostridium bifermentans)).